The primary structure comprises 348 residues: Tetraacyldisaccharide 4'-kinase (348 aa).

Position 50 to 57 (T50 to T57) interacts with ATP.

Belongs to the LpxK family.

It catalyses the reaction a lipid A disaccharide + ATP = a lipid IVA + ADP + H(+). It functions in the pathway glycolipid biosynthesis; lipid IV(A) biosynthesis; lipid IV(A) from (3R)-3-hydroxytetradecanoyl-[acyl-carrier-protein] and UDP-N-acetyl-alpha-D-glucosamine: step 6/6. Its function is as follows. Transfers the gamma-phosphate of ATP to the 4'-position of a tetraacyldisaccharide 1-phosphate intermediate (termed DS-1-P) to form tetraacyldisaccharide 1,4'-bis-phosphate (lipid IVA). The sequence is that of Tetraacyldisaccharide 4'-kinase from Desulfotalea psychrophila (strain LSv54 / DSM 12343).